Reading from the N-terminus, the 207-residue chain is Small ribosomal subunit protein uS4 (207 aa).

The region spanning 96–156 (SRLDNVVYRM…KKSHNQSRIY (61 aa)) is the S4 RNA-binding domain.

This sequence belongs to the universal ribosomal protein uS4 family. In terms of assembly, part of the 30S ribosomal subunit. Contacts protein S5. The interaction surface between S4 and S5 is involved in control of translational fidelity.

Functionally, one of the primary rRNA binding proteins, it binds directly to 16S rRNA where it nucleates assembly of the body of the 30S subunit. In terms of biological role, with S5 and S12 plays an important role in translational accuracy. The chain is Small ribosomal subunit protein uS4 from Blochmanniella floridana.